A 272-amino-acid polypeptide reads, in one-letter code: Imidazole glycerol phosphate synthase subunit HisF (272 aa).

Catalysis depends on residues Asp-11 and Asp-130.

It belongs to the HisA/HisF family. Heterodimer of HisH and HisF.

It is found in the cytoplasm. The enzyme catalyses 5-[(5-phospho-1-deoxy-D-ribulos-1-ylimino)methylamino]-1-(5-phospho-beta-D-ribosyl)imidazole-4-carboxamide + L-glutamine = D-erythro-1-(imidazol-4-yl)glycerol 3-phosphate + 5-amino-1-(5-phospho-beta-D-ribosyl)imidazole-4-carboxamide + L-glutamate + H(+). The protein operates within amino-acid biosynthesis; L-histidine biosynthesis; L-histidine from 5-phospho-alpha-D-ribose 1-diphosphate: step 5/9. In terms of biological role, IGPS catalyzes the conversion of PRFAR and glutamine to IGP, AICAR and glutamate. The HisF subunit catalyzes the cyclization activity that produces IGP and AICAR from PRFAR using the ammonia provided by the HisH subunit. The chain is Imidazole glycerol phosphate synthase subunit HisF from Methanococcus maripaludis (strain C7 / ATCC BAA-1331).